The chain runs to 310 residues: Vomeronasal type-1 receptor 101 (310 aa).

The Extracellular segment spans residues 1–19 (MNKVNILPSDTNMKITLFS). The helical transmembrane segment at 20–40 (ELSVGISANSILFFAHLCMFF) threads the bilayer. Over 41-49 (EENRSKPID) the chain is Cytoplasmic. The helical transmembrane segment at 50–70 (LCIAFLSLTQLMLLVTMGLIA) threads the bilayer. Residues 71 to 93 (ADMFMAQGIWDITTCRSLIYFHR) lie on the Extracellular side of the membrane. The cysteines at positions 85 and 172 are disulfide-linked. A helical membrane pass occupies residues 94–114 (LLRGFNLCAACLLHILWTFTL). At 115–134 (SPRSSCLTKFKHKSPHHISG) the chain is on the cytoplasmic side. A helical membrane pass occupies residues 135–155 (AYLFFCVLYMSFSSHLFVLVI). Residues 156-193 (ATSNLTSDHFMYVTQSCSLLPMSYSRTSTFSLLMVTRE) lie on the Extracellular side of the membrane. The N-linked (GlcNAc...) asparagine glycan is linked to Asn-159. The chain crosses the membrane as a helical span at residues 194–214 (VFLISLMALSSGYMVTLLWRH). Residues 215–238 (KKQAQHLHSTRLSSKASPQQRATR) lie on the Cytoplasmic side of the membrane. A helical transmembrane segment spans residues 239 to 259 (TILLLMTFFVVFYILGTVIFH). The Extracellular portion of the chain corresponds to 260–268 (SRTKFKDGS). Residues 269 to 289 (IFYCVQIIVSHSYATISPFVF) traverse the membrane as a helical segment. Over 290–310 (VFSEKRIIKFFRSMCGRIVNT) the chain is Cytoplasmic.

It belongs to the G-protein coupled receptor 1 family. In terms of tissue distribution, expressed in 1-4% of neurons of the vomeronasal organ. Only one pheromone receptor gene may be expressed in a particular neuron. Not expressed in the main olfactory epithelium.

Its subcellular location is the cell membrane. Functionally, putative pheromone receptor implicated in the regulation of social as well as reproductive behavior. The polypeptide is Vomeronasal type-1 receptor 101 (Vom1r101) (Rattus norvegicus (Rat)).